A 1293-amino-acid polypeptide reads, in one-letter code: Enterobactin synthase component F (1293 aa).

The interval 1–301 (MSQHLPLVAA…NVLPLGIHIA (301 aa)) is elongation/condensation. The interval 482-887 (SYREMREQVV…ALPDVEQAVT (406 aa)) is adenylation. Residues 971-1046 (APKAGSETII…KLATIIDGEE (76 aa)) enclose the Carrier domain. Position 1006 is an O-(pantetheine 4'-phosphoryl)serine (Ser1006). A thioesterase region spans residues 1066-1293 (PTLFCFHPAS…GPIIRATLNR (228 aa)). His1271 functions as the Proton acceptor; for thioesterase activity in the catalytic mechanism.

This sequence belongs to the ATP-dependent AMP-binding enzyme family. EntF subfamily. As to quaternary structure, proteins EntB, EntD, EntE and EntF are the component of the enterobactin synthase. Components probably do not form a stable complex. EntF acts as a catalytic monomer. Requires pantetheine 4'-phosphate as cofactor. 4'-phosphopantetheine is transferred from CoA to a specific serine of apo-EntF by EntD. Holo-EntF so formed is then acylated with seryl-AMP.

The protein localises to the cytoplasm. The enzyme catalyses 3 2,3-dihydroxybenzoate + 3 L-serine + 6 ATP = enterobactin + 6 AMP + 6 diphosphate + 4 H(+). The catalysed reaction is holo-[peptidyl-carrier protein] + L-serine + ATP = L-seryl-[peptidyl-carrier protein] + AMP + diphosphate. It participates in siderophore biosynthesis; enterobactin biosynthesis. Involved in the biosynthesis of the siderophore enterobactin (enterochelin), which is a macrocyclic trimeric lactone of N-(2,3-dihydroxybenzoyl)-serine. EntF catalyzes the activation of L-serine via ATP-dependent PPi exchange reaction to form seryladenylate. Activated L-serine is loaded onto the peptidyl carrier domain via a thioester linkage to the phosphopanthetheine moiety, forming seryl-S-Ppant-EntF. EntF acts then as the sole catalyst for the formation of the three amide and three ester linkages found in enterobactin, using seryladenylate and 2,3-dihydroxybenzoate-S-Ppant-EntB (DHB-S-Ppant-EntB) as substrates, via the formation of a DHB-Ser-S-Ppant-EntF intermediate. This chain is Enterobactin synthase component F (entF), found in Escherichia coli O157:H7.